We begin with the raw amino-acid sequence, 940 residues long: Phagocyte signaling-impaired protein (940 aa).

The TPR repeat unit spans residues 77-110 (STTLHVMTLCYKETDQLDKICQIFTSASKQLPGN).

This sequence belongs to the MDM20/NAA25 family. In terms of assembly, component of the N-terminal acetyltransferase B (NatB) complex.

It localises to the lysosome. Its function is as follows. Non-catalytic subunit of the NatB complex which catalyzes acetylation of the N-terminal methionine residues of proteins beginning with Met-Asp or Met-Glu. Has 2 roles in the larval immune response: required both for the phagocytic degradation of internalized bacteria and for the induction of Defensin in the fat body. Within the phagocytic blood cells, has a role in detection of infection and activation of the humoral immune response. The chain is Phagocyte signaling-impaired protein from Aedes aegypti (Yellowfever mosquito).